A 254-amino-acid polypeptide reads, in one-letter code: Probable phosphoglycerate mutase 4 (254 aa).

Substrate-binding positions include 10–17 and 23–24; these read RHGESTWN and SC. H11 functions as the Tele-phosphohistidine intermediate in the catalytic mechanism. S14 and S23 each carry phosphoserine. Phosphotyrosine is present on Y26. Position 31 is a phosphoserine (S31). Substrate-binding positions include R62, 89 to 92, and K100; that span reads ERHY. E89 (proton donor/acceptor) is an active-site residue. K106 is modified (N6-acetyllysine). 116–117 provides a ligand contact to substrate; the sequence is RR. S118 carries the post-translational modification Phosphoserine. Substrate is bound at residue 187-188; the sequence is GN. The residue at position 251 (K251) is an N6-acetyllysine; alternate. K251 carries the post-translational modification N6-succinyllysine; alternate. N6-acetyllysine is present on residues K253 and K254.

Belongs to the phosphoglycerate mutase family. BPG-dependent PGAM subfamily.

It catalyses the reaction (2R)-2-phosphoglycerate = (2R)-3-phosphoglycerate. It carries out the reaction (2R)-3-phospho-glyceroyl phosphate = (2R)-2,3-bisphosphoglycerate + H(+). This chain is Probable phosphoglycerate mutase 4 (PGAM4), found in Pan troglodytes (Chimpanzee).